We begin with the raw amino-acid sequence, 252 residues long: Probable transcriptional regulatory protein Fnod_1106 (252 aa).

The protein belongs to the TACO1 family.

The protein localises to the cytoplasm. The chain is Probable transcriptional regulatory protein Fnod_1106 from Fervidobacterium nodosum (strain ATCC 35602 / DSM 5306 / Rt17-B1).